The primary structure comprises 533 residues: MWLELGAMLRRTCGPLGRAVRLPCGGALGPRPHWWGPCRSCLAQSVHQDQPGRGLSEDDIRRAREARLRKAPRPQLSDRSRERKVPASRISRLASFGGLAVGLGLGALAEVTKKSLPGGSLQHEGVSGLGSSPFLSEANAERIVQTLCTVRGAALKIGQMLSIQDNSFISPQLQRIFERVRQSADFMPRWQMMRVLEEELGKDWQDKVASLEEVPFAAASIGQVHQGLLKDGTEVAVKIQYPGVAQSIQSDVENLLALLKMSVGLPEGLFAEQSLQTLQQELAWECDYRREAACAQTFRKLLADDPFFRVPAVVQELCTTRVLGMELAGGIPLDQCQGLSQDIRNQICFQLLRLCLRELFEFRFMQTDPNWANFLYDASSHQVTLLDFGASRAFGTEFTDHYIEVVKAAADGDRDRVLQKSQDLKFLTGFETKAFSDAHVEAVMILGEPFAASGPYDFGAGETARRIQGLIPVLLRHRLRPPPEETYALHRKLAGAFLACARLHAHIACRDLFQDTYHRYWASRQTLPLPAAS.

A helical membrane pass occupies residues 93–109 (LASFGGLAVGLGLGALA). Positions 156 to 159 (KIGQ) match the KxGQ motif motif. In terms of domain architecture, Protein kinase spans 192 to 424 (MMRVLEEELG…DRVLQKSQDL (233 aa)). The AAAS motif signature appears at 217 to 220 (AAAS). Residues serine 220, lysine 238, and 325–328 (MELA) contribute to the ATP site. Aspartate 368 acts as the Proton acceptor in catalysis. Positions 373 and 387 each coordinate ATP.

Belongs to the protein kinase superfamily. ADCK protein kinase family. In terms of assembly, homodimer; homodimerizes via its transmembrane region. Interacts with COQ6 and COQ7. Interacts with the multi-subunit COQ enzyme complex, composed of at least COQ3, COQ4, COQ5, COQ6, COQ7 and COQ9.

It localises to the mitochondrion membrane. It is found in the cytoplasm. The protein localises to the cytosol. Its subcellular location is the cell membrane. It functions in the pathway cofactor biosynthesis; ubiquinone biosynthesis. Functionally, atypical kinase involved in the biosynthesis of coenzyme Q, also named ubiquinone, an essential lipid-soluble electron transporter for aerobic cellular respiration. Its substrate specificity is still unclear: may act as a protein kinase that mediates phosphorylation of COQ3. According to other reports, acts as a small molecule kinase, possibly a lipid kinase that phosphorylates a prenyl lipid in the ubiquinone biosynthesis pathway, as suggested by its ability to bind coenzyme Q lipid intermediates. However, the small molecule kinase activity was not confirmed by another publication. Required for podocyte migration. In Mus musculus (Mouse), this protein is Atypical kinase COQ8B, mitochondrial.